The chain runs to 96 residues: Aspartyl/glutamyl-tRNA(Asn/Gln) amidotransferase subunit C (96 aa).

The protein belongs to the GatC family. As to quaternary structure, heterotrimer of A, B and C subunits.

It catalyses the reaction L-glutamyl-tRNA(Gln) + L-glutamine + ATP + H2O = L-glutaminyl-tRNA(Gln) + L-glutamate + ADP + phosphate + H(+). The catalysed reaction is L-aspartyl-tRNA(Asn) + L-glutamine + ATP + H2O = L-asparaginyl-tRNA(Asn) + L-glutamate + ADP + phosphate + 2 H(+). Functionally, allows the formation of correctly charged Asn-tRNA(Asn) or Gln-tRNA(Gln) through the transamidation of misacylated Asp-tRNA(Asn) or Glu-tRNA(Gln) in organisms which lack either or both of asparaginyl-tRNA or glutaminyl-tRNA synthetases. The reaction takes place in the presence of glutamine and ATP through an activated phospho-Asp-tRNA(Asn) or phospho-Glu-tRNA(Gln). In Sulfurimonas denitrificans (strain ATCC 33889 / DSM 1251) (Thiomicrospira denitrificans (strain ATCC 33889 / DSM 1251)), this protein is Aspartyl/glutamyl-tRNA(Asn/Gln) amidotransferase subunit C.